Here is a 619-residue protein sequence, read N- to C-terminus: ETS-related transcription factor Elf-1 (619 aa).

Residues S110, S163, S167, and S168 each carry the phosphoserine modification. A disordered region spans residues 158–199 (EKYADSPGASSPEQPKRKKGRKTKPPRPDSPATTPNISVKKK). Residues 173–182 (KRKKGRKTKP) are compositionally biased toward basic residues. S187 carries the post-translational modification Phosphoserine. T190 carries the phosphothreonine modification. The ETS DNA-binding region spans 208–290 (IYLWEFLLAL…EGQRLVYQFK (83 aa)). Residues 300–366 (NDEDPSSSIE…DPVEVAQPSE (67 aa)) form a disordered region. Over residues 305 to 321 (SSSIESSDPSLSSSATS) the composition is skewed to low complexity. Over residues 322–335 (NRNQTSRSRVSSSP) the composition is skewed to polar residues. S432 is subject to Phosphoserine. Positions 564-592 (TLTQEVEKKESEDHLKENTEKTEQQPQPY) are disordered. Basic and acidic residues predominate over residues 568-586 (EVEKKESEDHLKENTEKTE).

Belongs to the ETS family. As to quaternary structure, binds to the underphosphorylated form of RB. May interact with other transcription factors in order to regulate specific genes. Interacts with RUNX1. In terms of tissue distribution, in fetal tissues, it is highly expressed in heart, lung liver and kidney, and weakly expressed in brain. In adult, it is highly expressed in pancreas, spleen, thymus and peripheral blood leukocytes, expressed at moderate levels in heart, placenta, lung, liver, skeletal muscle, kidney, prostate, ovary, small intestine and colon, and weakly expressed in brain and testis.

It localises to the nucleus. Its function is as follows. Transcription factor that activates the LYN and BLK promoters. Appears to be required for the T-cell-receptor-mediated trans activation of HIV-2 gene expression. Binds specifically to two purine-rich motifs in the HIV-2 enhancer. This is ETS-related transcription factor Elf-1 (ELF1) from Homo sapiens (Human).